The sequence spans 417 residues: Serine hydroxymethyltransferase (417 aa).

Residues L121 and 125–127 contribute to the (6S)-5,6,7,8-tetrahydrofolate site; that span reads GHL. K229 carries the N6-(pyridoxal phosphate)lysine modification. Position 355–357 (355–357) interacts with (6S)-5,6,7,8-tetrahydrofolate; that stretch reads SPF.

The protein belongs to the SHMT family. In terms of assembly, homodimer. The cofactor is pyridoxal 5'-phosphate.

It is found in the cytoplasm. The enzyme catalyses (6R)-5,10-methylene-5,6,7,8-tetrahydrofolate + glycine + H2O = (6S)-5,6,7,8-tetrahydrofolate + L-serine. It functions in the pathway one-carbon metabolism; tetrahydrofolate interconversion. Its pathway is amino-acid biosynthesis; glycine biosynthesis; glycine from L-serine: step 1/1. Catalyzes the reversible interconversion of serine and glycine with tetrahydrofolate (THF) serving as the one-carbon carrier. This reaction serves as the major source of one-carbon groups required for the biosynthesis of purines, thymidylate, methionine, and other important biomolecules. Also exhibits THF-independent aldolase activity toward beta-hydroxyamino acids, producing glycine and aldehydes, via a retro-aldol mechanism. The sequence is that of Serine hydroxymethyltransferase from Salmonella paratyphi C (strain RKS4594).